Here is a 511-residue protein sequence, read N- to C-terminus: Glutamyl-tRNA(Gln) amidotransferase subunit A, mitochondrial (511 aa).

Active-site charge relay system residues include K72 and S149. S173 serves as the catalytic Acyl-ester intermediate.

It belongs to the amidase family. GatA subfamily. Subunit of the heterotrimeric GatCAB amidotransferase (AdT) complex, composed of A, B and C subunits.

Its subcellular location is the mitochondrion. It carries out the reaction L-glutamyl-tRNA(Gln) + L-glutamine + ATP + H2O = L-glutaminyl-tRNA(Gln) + L-glutamate + ADP + phosphate + H(+). Functionally, allows the formation of correctly charged Gln-tRNA(Gln) through the transamidation of misacylated Glu-tRNA(Gln) in the mitochondria. The reaction takes place in the presence of glutamine and ATP through an activated gamma-phospho-Glu-tRNA(Gln). The protein is Glutamyl-tRNA(Gln) amidotransferase subunit A, mitochondrial of Fusarium vanettenii (strain ATCC MYA-4622 / CBS 123669 / FGSC 9596 / NRRL 45880 / 77-13-4) (Fusarium solani subsp. pisi).